The following is a 496-amino-acid chain: UDP-glycosyltransferase 73C4 (496 aa).

UDP-alpha-D-glucose is bound by residues S297, 357-359 (SPQ), 374-382 (HCGWNSTLE), and 396-399 (FGDQ). Positions 450 to 475 (SDDAKERRRRVKELGESAHKAVEEGG) are disordered. The span at 451–472 (DDAKERRRRVKELGESAHKAVE) shows a compositional bias: basic and acidic residues.

The protein belongs to the UDP-glycosyltransferase family.

This chain is UDP-glycosyltransferase 73C4 (UGT73C4), found in Arabidopsis thaliana (Mouse-ear cress).